The following is a 477-amino-acid chain: MRFSRFIIGLTSCIAFSVQAANVDEYITQLPAGANLALMVQKVGASAPAIDYHSQQMALPASTQKVITALAALIQLGPDFRFTTTLETKGNVENGVLKGDLVARFGADPTLKRQDIRNMVATLKKSGVNQIDGNVLIDTSIFASHDKAPGWPWNDMTQCFSAPPAAAIVDRNCFSVSLYSAPKPGDMAFIRVASYYPVTMFSQVRTLPRGSAEAQYCELDVVPGDLNRFTLTGCLPQRSEPLPLAFAVQDGASYAGAILKDELKQAGITWSGTLLRQTQVNEPGTVVASKQSAPLHDLLKIMLKKSDNMIADTVFRMIGHARFNVPGTWRAGSDAVRQILRQQAGVDIGNTIIADGSGLSRHNLIAPATMMQVLQYIAQHDNELNFISMLPLAGYDGSLQYRAGLHQAGVDGKVSAKTGSLQGVYNLAGFITTASGQRMAFVQYLSGYAVEPADQRNRRIPLVRFESRLYKDIYQNN.

The N-terminal stretch at 1-20 (MRFSRFIIGLTSCIAFSVQA) is a signal peptide. The active-site Acyl-ester intermediate is S62. K65 (proton acceptor) is an active-site residue. An absent in class-A beta-lactamases region spans residues 90 to 263 (GNVENGVLKG…YAGAILKDEL (174 aa)). S306 is an active-site residue. Residue K417 coordinates substrate.

Belongs to the peptidase S13 family.

It is found in the periplasm. It catalyses the reaction Preferential cleavage: (Ac)2-L-Lys-D-Ala-|-D-Ala. Also transpeptidation of peptidyl-alanyl moieties that are N-acyl substituents of D-alanine.. Its pathway is cell wall biogenesis; peptidoglycan biosynthesis. Not involved in transpeptidation but exclusively catalyzes a DD-carboxypeptidase and DD-endopeptidase reaction. This chain is D-alanyl-D-alanine carboxypeptidase DacB (dacB), found in Escherichia coli (strain K12).